A 954-amino-acid polypeptide reads, in one-letter code: Glycine dehydrogenase (decarboxylating) (954 aa).

At Lys706 the chain carries N6-(pyridoxal phosphate)lysine.

Belongs to the GcvP family. The glycine cleavage system is composed of four proteins: P, T, L and H. It depends on pyridoxal 5'-phosphate as a cofactor.

It carries out the reaction N(6)-[(R)-lipoyl]-L-lysyl-[glycine-cleavage complex H protein] + glycine + H(+) = N(6)-[(R)-S(8)-aminomethyldihydrolipoyl]-L-lysyl-[glycine-cleavage complex H protein] + CO2. In terms of biological role, the glycine cleavage system catalyzes the degradation of glycine. The P protein binds the alpha-amino group of glycine through its pyridoxal phosphate cofactor; CO(2) is released and the remaining methylamine moiety is then transferred to the lipoamide cofactor of the H protein. This Thermosynechococcus vestitus (strain NIES-2133 / IAM M-273 / BP-1) protein is Glycine dehydrogenase (decarboxylating).